Reading from the N-terminus, the 174-residue chain is Negative modulator of initiation of replication (174 aa).

It belongs to the SeqA family. Homodimer. Polymerizes to form helical filaments.

It is found in the cytoplasm. Negative regulator of replication initiation, which contributes to regulation of DNA replication and ensures that replication initiation occurs exactly once per chromosome per cell cycle. Binds to pairs of hemimethylated GATC sequences in the oriC region, thus preventing assembly of replication proteins and re-initiation at newly replicated origins. Repression is relieved when the region becomes fully methylated. The polypeptide is Negative modulator of initiation of replication (Pseudoalteromonas atlantica (strain T6c / ATCC BAA-1087)).